The sequence spans 574 residues: Proline--tRNA ligase (574 aa).

It belongs to the class-II aminoacyl-tRNA synthetase family. ProS type 1 subfamily. In terms of assembly, homodimer.

It is found in the cytoplasm. The catalysed reaction is tRNA(Pro) + L-proline + ATP = L-prolyl-tRNA(Pro) + AMP + diphosphate. Its function is as follows. Catalyzes the attachment of proline to tRNA(Pro) in a two-step reaction: proline is first activated by ATP to form Pro-AMP and then transferred to the acceptor end of tRNA(Pro). As ProRS can inadvertently accommodate and process non-cognate amino acids such as alanine and cysteine, to avoid such errors it has two additional distinct editing activities against alanine. One activity is designated as 'pretransfer' editing and involves the tRNA(Pro)-independent hydrolysis of activated Ala-AMP. The other activity is designated 'posttransfer' editing and involves deacylation of mischarged Ala-tRNA(Pro). The misacylated Cys-tRNA(Pro) is not edited by ProRS. The chain is Proline--tRNA ligase from Buchnera aphidicola subsp. Baizongia pistaciae (strain Bp).